The following is a 723-amino-acid chain: Peroxisomal bifunctional enzyme (723 aa).

The interval 1-282 (MAEYTRLHNA…FAERKANKWS (282 aa)) is enoyl-CoA hydratase / isomerase. Lys-38 is modified (N6-succinyllysine). Substrate is bound at residue Gly-101. Position 165 is an N6-acetyllysine; alternate (Lys-165). N6-succinyllysine; alternate is present on Lys-165. Lys-171 carries the post-translational modification N6-acetyllysine. Position 219 is an N6-acetyllysine; alternate (Lys-219). Residue Lys-219 is modified to N6-succinyllysine; alternate. Lys-250 carries the post-translational modification N6-acetyllysine. Residues Lys-280 and Lys-290 each carry the N6-succinyllysine modification. Positions 283 to 572 (TPSGASWKTA…DVLCELGRFG (290 aa)) are 3-hydroxyacyl-CoA dehydrogenase. N6-acetyllysine is present on residues Lys-346, Lys-350, and Lys-464. Position 532 is an N6-succinyllysine (Lys-532). Thr-548 is modified (phosphothreonine). Residue Lys-577 is modified to N6-succinyllysine. N6-acetyllysine; alternate is present on residues Lys-584, Lys-591, and Lys-710. N6-succinyllysine; alternate is present on residues Lys-584, Lys-591, and Lys-710. Ser-718 carries the phosphoserine modification. The short motif at 721 to 723 (SKL) is the Microbody targeting signal element. Residue Lys-722 is modified to N6-succinyllysine.

This sequence in the N-terminal section; belongs to the enoyl-CoA hydratase/isomerase family. The protein in the C-terminal section; belongs to the 3-hydroxyacyl-CoA dehydrogenase family. Monomer. In terms of processing, acetylated, leading to enhanced enzyme activity. Acetylation is enhanced by up to 80% after treatment either with trichostin A (TSA) or with nicotinamide (NAM) with highest increase on Lys-346. Acetylation and enzyme activity increased by about 1.5% on addition of fatty acids. As to expression, liver and kidney. Strongly expressed in the terminal segments of the proximal tubule. Lower amounts seen in the brain.

Its subcellular location is the peroxisome. The enzyme catalyses a (3S)-3-hydroxyacyl-CoA = a (2E)-enoyl-CoA + H2O. The catalysed reaction is a 4-saturated-(3S)-3-hydroxyacyl-CoA = a (3E)-enoyl-CoA + H2O. It catalyses the reaction a (3Z)-enoyl-CoA = a 4-saturated (2E)-enoyl-CoA. It carries out the reaction a (3E)-enoyl-CoA = a 4-saturated (2E)-enoyl-CoA. The enzyme catalyses a (3S)-3-hydroxyacyl-CoA + NAD(+) = a 3-oxoacyl-CoA + NADH + H(+). The catalysed reaction is (2S,3S)-3-hydroxy-2-methylbutanoyl-CoA = (2E)-2-methylbut-2-enoyl-CoA + H2O. It catalyses the reaction (3S)-hydroxyhexadecanoyl-CoA + NAD(+) = 3-oxohexadecanoyl-CoA + NADH + H(+). It carries out the reaction (3S)-hydroxyhexadecanoyl-CoA = (2E)-hexadecenoyl-CoA + H2O. The enzyme catalyses (2E)-hexadecenedioyl-CoA + H2O = (3S)-hydroxyhexadecanedioyl-CoA. The catalysed reaction is (3S)-hydroxyhexadecanedioyl-CoA + NAD(+) = 3-oxohexadecanedioyl-CoA + NADH + H(+). It catalyses the reaction (3E,5Z)-tetradecadienoyl-CoA = (2E,5Z)-tetradecadienoyl-CoA. It carries out the reaction (3E,5Z)-octadienoyl-CoA = (2E,5Z)-octadienoyl-CoA. The enzyme catalyses (3S)-hydroxydecanoyl-CoA + NAD(+) = 3-oxodecanoyl-CoA + NADH + H(+). The catalysed reaction is (3E)-decenoyl-CoA = (2E)-decenoyl-CoA. It catalyses the reaction (3Z)-hexenoyl-CoA = (2E)-hexenoyl-CoA. It carries out the reaction (3E)-hexenoyl-CoA = (2E)-hexenoyl-CoA. The enzyme catalyses (3S)-hydroxydecanoyl-CoA = (2E)-decenoyl-CoA + H2O. The catalysed reaction is (3S)-hydroxyhexanoyl-CoA = (2E)-hexenoyl-CoA + H2O. It participates in lipid metabolism; fatty acid beta-oxidation. Enzyme activity enhanced by acetylation. Its function is as follows. Peroxisomal trifunctional enzyme possessing 2-enoyl-CoA hydratase, 3-hydroxyacyl-CoA dehydrogenase, and delta 3, delta 2-enoyl-CoA isomerase activities. Catalyzes two of the four reactions of the long chain fatty acids peroxisomal beta-oxidation pathway. Can also use branched-chain fatty acids such as 2-methyl-2E-butenoyl-CoA as a substrate, which is hydrated into (2S,3S)-3-hydroxy-2-methylbutanoyl-CoA. Optimal isomerase for 2,5 double bonds into 3,5 form isomerization in a range of enoyl-CoA species. Also able to isomerize both 3-cis and 3-trans double bonds into the 2-trans form in a range of enoyl-CoA species. With HSD17B4, catalyzes the hydration of trans-2-enoyl-CoA and the dehydrogenation of 3-hydroxyacyl-CoA, but with opposite chiral specificity. Regulates the amount of medium-chain dicarboxylic fatty acids which are essential regulators of all fatty acid oxidation pathways. Also involved in the degradation of long-chain dicarboxylic acids through peroxisomal beta-oxidation. In Homo sapiens (Human), this protein is Peroxisomal bifunctional enzyme.